Reading from the N-terminus, the 262-residue chain is Adenosylcobinamide-GDP ribazoletransferase (262 aa).

6 helical membrane-spanning segments follow: residues 43-63 (YFGL…WLTQ), 66-86 (LPAG…TGGF), 120-140 (GALA…ELAL), 146-166 (AGSA…SIIF), 191-211 (LLIL…LAAL), and 242-262 (AAQQ…GNIL).

This sequence belongs to the CobS family. Mg(2+) is required as a cofactor.

The protein localises to the cell inner membrane. It carries out the reaction alpha-ribazole + adenosylcob(III)inamide-GDP = adenosylcob(III)alamin + GMP + H(+). The enzyme catalyses alpha-ribazole 5'-phosphate + adenosylcob(III)inamide-GDP = adenosylcob(III)alamin 5'-phosphate + GMP + H(+). Its pathway is cofactor biosynthesis; adenosylcobalamin biosynthesis; adenosylcobalamin from cob(II)yrinate a,c-diamide: step 7/7. Joins adenosylcobinamide-GDP and alpha-ribazole to generate adenosylcobalamin (Ado-cobalamin). Also synthesizes adenosylcobalamin 5'-phosphate from adenosylcobinamide-GDP and alpha-ribazole 5'-phosphate. This Shewanella baltica (strain OS155 / ATCC BAA-1091) protein is Adenosylcobinamide-GDP ribazoletransferase.